The sequence spans 329 residues: Endo-beta-N-acetylglucosaminidase F3 (329 aa).

The segment at residues Met1 to Ser39 is a signal peptide (or 40, or 41). Residues Gly48–Asn329 form the GH18 domain. The O-linked (Man...) threonine glycan is linked to Thr88. The active-site Proton donor is Glu167.

It belongs to the glycosyl hydrolase 18 family. In terms of assembly, monomer. Post-translationally, carbohydrate at Thr-88 consists of (2-OMe)Man1-4GlcNAcU1-4GlcU1-4Glc1-4(2-OMe)GlcU1-4[(2-OMe)Rham1-2]Man.

Its subcellular location is the secreted. The catalysed reaction is an N(4)-(oligosaccharide-(1-&gt;3)-[oligosaccharide-(1-&gt;6)]-beta-D-Man-(1-&gt;4)-beta-D-GlcNAc-(1-&gt;4)-alpha-D-GlcNAc)-L-asparaginyl-[protein] + H2O = an oligosaccharide-(1-&gt;3)-[oligosaccharide-(1-&gt;6)]-beta-D-Man-(1-&gt;4)-D-GlcNAc + N(4)-(N-acetyl-beta-D-glucosaminyl)-L-asparaginyl-[protein]. Its function is as follows. Endohydrolysis of the di-N-acetylchitobiosyl unit in high-mannose glycopeptides and glycoproteins. Hydrolyzes bi- and triantennary glycans. The presence of a core-bound fucose greatly augments endo F3 activity on biantennary and, presumably, triantennary oligosaccharides. This chain is Endo-beta-N-acetylglucosaminidase F3 (endOF3), found in Elizabethkingia meningoseptica (Chryseobacterium meningosepticum).